The primary structure comprises 34 residues: Photosystem I reaction center subunit XII (34 aa).

Residues 10-32 (VFVALVVAAHAAVLALRLSISLY) traverse the membrane as a helical segment.

Belongs to the PsaM family.

Its subcellular location is the cellular thylakoid membrane. In Parasynechococcus marenigrum (strain WH8102), this protein is Photosystem I reaction center subunit XII.